We begin with the raw amino-acid sequence, 738 residues long: Coiled-coil domain-containing protein 142 (738 aa).

The disordered stretch occupies residues 1–34 (MARASSSSGPLPPLANVPSSWAQPVGAGEERDEG). Residues 69 to 92 (ALQRLRATLLRLHREREQLLRARD) adopt a coiled-coil conformation. Residues 682–704 (LSTLGGGGRGGGGGGGPGPSPEA) are disordered. Gly residues predominate over residues 685 to 698 (LGGGGRGGGGGGGP).

In Mus musculus (Mouse), this protein is Coiled-coil domain-containing protein 142 (Ccdc142).